The sequence spans 198 residues: Peptidyl-tRNA hydrolase (198 aa).

Y16 provides a ligand contact to tRNA. Residue H21 is the Proton acceptor of the active site. TRNA contacts are provided by F67, N69, and N115.

It belongs to the PTH family. As to quaternary structure, monomer.

The protein localises to the cytoplasm. The catalysed reaction is an N-acyl-L-alpha-aminoacyl-tRNA + H2O = an N-acyl-L-amino acid + a tRNA + H(+). Its function is as follows. Hydrolyzes ribosome-free peptidyl-tRNAs (with 1 or more amino acids incorporated), which drop off the ribosome during protein synthesis, or as a result of ribosome stalling. Catalyzes the release of premature peptidyl moieties from peptidyl-tRNA molecules trapped in stalled 50S ribosomal subunits, and thus maintains levels of free tRNAs and 50S ribosomes. In Prochlorococcus marinus (strain MIT 9301), this protein is Peptidyl-tRNA hydrolase.